The chain runs to 367 residues: Phosphoribosylformylglycinamidine cyclo-ligase (367 aa).

Belongs to the AIR synthase family.

The protein resides in the cytoplasm. It catalyses the reaction 2-formamido-N(1)-(5-O-phospho-beta-D-ribosyl)acetamidine + ATP = 5-amino-1-(5-phospho-beta-D-ribosyl)imidazole + ADP + phosphate + H(+). Its pathway is purine metabolism; IMP biosynthesis via de novo pathway; 5-amino-1-(5-phospho-D-ribosyl)imidazole from N(2)-formyl-N(1)-(5-phospho-D-ribosyl)glycinamide: step 2/2. This chain is Phosphoribosylformylglycinamidine cyclo-ligase, found in Cyanothece sp. (strain PCC 7425 / ATCC 29141).